We begin with the raw amino-acid sequence, 261 residues long: RING finger and CHY zinc finger domain-containing protein 1 (261 aa).

Residues 13–80 (LAQGPRGCEH…AQQTCEDCST (68 aa)) form a CHY-type zinc finger. The Zn(2+) site is built by Cys-20, His-22, Cys-33, Cys-34, Cys-40, Cys-43, His-44, His-50, Cys-62, Cys-65, Cys-75, Cys-78, Cys-87, Cys-90, His-101, Cys-102, Cys-105, Cys-108, His-118, Cys-119, Cys-122, Cys-125, His-134, and Cys-136. The segment at 82–144 (FGEYYCSICH…KCIENVSRQN (63 aa)) adopts a CTCHY-type zinc-finger fold. An RING-type zinc finger spans residues 145 to 189 (CPICLEDIHTSRVVAHVLPCGHLLHRTCYEEMLKEGYRCPLCMHS).

In terms of assembly, monomer and homodimer. Interacts with AR, MDM2, KAT5, PLAG1, PLAGL2, COPE, UBE2D2 and GORAB/NTKLBP1. Subject to ubiquitination and proteasomal degradation. Interaction with PLAGL2 or KAT5 enhances protein stability. In terms of tissue distribution, detected in testis, liver, kidney and heart.

The protein localises to the nucleus. It localises to the nucleus speckle. Its subcellular location is the cytoplasm. The enzyme catalyses S-ubiquitinyl-[E2 ubiquitin-conjugating enzyme]-L-cysteine + [acceptor protein]-L-lysine = [E2 ubiquitin-conjugating enzyme]-L-cysteine + N(6)-ubiquitinyl-[acceptor protein]-L-lysine.. It functions in the pathway protein modification; protein ubiquitination. In terms of biological role, E3 ubiquitin-protein ligase that mediates ubiquitination of target proteins, including p53/TP53, TP73, HDAC1 and CDKN1B. Mediates ubiquitination and degradation of p53/TP53; preferentially acts on tetrameric p53/TP53. Catalyzes monoubiquitinates the translesion DNA polymerase POLH. Involved in the ribosome-associated quality control (RQC) pathway, which mediates the extraction of incompletely synthesized nascent chains from stalled ribosomes: RCHY1 acts downstream of NEMF and recognizes CAT tails associated with stalled nascent chains, leading to their ubiquitination and degradation. The sequence is that of RING finger and CHY zinc finger domain-containing protein 1 (Rchy1) from Mus musculus (Mouse).